We begin with the raw amino-acid sequence, 501 residues long: AREETLIIIPGLPLSLGATDTMNDVAIVKEGWLHKRGEYIKTWRPRYFLLKNDGTFIGYKERPQDVDQRESPLNNFSVAQCQLMKTERPRPNTFIIRCLQWTTVIERTFHVETPEEREEWATAIQTVADGLKRQEEETMDFRSGSPSDNSGAEEMEVSLAKPKHRVTMNEFEYLKLLGKGTFGKVILVKEKATGRYYAMKILKKEVIVAKDEVAHTLTENRVLQNSRHPFLTALKYSFQTHDRLCFVMEYANGGELFFHLSRERVFSEDRARFYGAEIVSALDYLHSEKNVVYRDLKLENLMLDKDGHIKITDFGLCKEGIKDGATMKTFCGTPEYLAPEVLEDNDYGRAVDWWGLGVVMYEMMCGRLPFYNQDHEKLFELILMEEIRFPRTLGPEAKSLLSGLLKKDPTQRLGGGSEDAKEIMQHRFFANIVWQDVYEKKLSPPFKPQVTSETDTRYFDEEFTAQMITITPPDQDDSMECVDSERRPHFPQFSYSASGTA.

The region spanning 26-129 (AIVKEGWLHK…WATAIQTVAD (104 aa)) is the PH domain. Residues 135–158 (EEETMDFRSGSPSDNSGAEEMEVS) form a disordered region. The region spanning 171-429 (FEYLKLLGKG…AKEIMQHRFF (259 aa)) is the Protein kinase domain. Residues 177–185 (LGKGTFGKV) and Lys-200 each bind ATP. Catalysis depends on Asp-295, which acts as the Proton acceptor. Tyr-347 carries the phosphotyrosine modification. One can recognise an AGC-kinase C-terminal domain in the interval 430–501 (ANIVWQDVYE…QFSYSASGTA (72 aa)). Positions 471-501 (TPPDQDDSMECVDSERRPHFPQFSYSASGTA) are disordered.

The protein belongs to the protein kinase superfamily. AGC Ser/Thr protein kinase family. RAC subfamily. Interacts with mouse THEM4. In terms of processing, autophosphorylated on threonine and serine residues.

It carries out the reaction L-seryl-[protein] + ATP = O-phospho-L-seryl-[protein] + ADP + H(+). The enzyme catalyses L-threonyl-[protein] + ATP = O-phospho-L-threonyl-[protein] + ADP + H(+). The sequence is that of AKT kinase-transforming protein (V-AKT) from Mus musculus (Mouse).